A 316-amino-acid polypeptide reads, in one-letter code: MKILLANPRGFCAGVDRAISIVERALELYQPPIYVRHEVVHNRFVVEGLKQRGARFVEELNEVPDDNIVIFSAHGVSQAVRQEAKERSLTVFDATCPLVTKVHMEVARASRKHMEVVLIGHAGHPEVEGTMGQYASDTGGMYLVEKPEDVVSLQAKVKDPSNLHYVSQTTLSVDETADVIDELRRVFPKIQGPRKDDICYATQNRQDAVRILAEQVDVMVVVGSKNSSNSTRLKELAEKLGTPGYLIDCPQDIDPEWFVDAQLIGVTAGASAPEELVNQILDRIKELGATSVEEVLGREENMFFEVPKELQIKQVD.

Position 12 (C12) interacts with [4Fe-4S] cluster. (2E)-4-hydroxy-3-methylbut-2-enyl diphosphate is bound by residues H41 and H74. Dimethylallyl diphosphate is bound by residues H41 and H74. Isopentenyl diphosphate contacts are provided by H41 and H74. Residue C96 coordinates [4Fe-4S] cluster. A (2E)-4-hydroxy-3-methylbut-2-enyl diphosphate-binding site is contributed by H124. Dimethylallyl diphosphate is bound at residue H124. H124 is an isopentenyl diphosphate binding site. Residue E126 is the Proton donor of the active site. T169 provides a ligand contact to (2E)-4-hydroxy-3-methylbut-2-enyl diphosphate. C199 contributes to the [4Fe-4S] cluster binding site. The (2E)-4-hydroxy-3-methylbut-2-enyl diphosphate site is built by S227, S228, N229, and S271. Dimethylallyl diphosphate-binding residues include S227, S228, N229, and S271. Residues S227, S228, N229, and S271 each contribute to the isopentenyl diphosphate site.

This sequence belongs to the IspH family. It depends on [4Fe-4S] cluster as a cofactor.

It carries out the reaction isopentenyl diphosphate + 2 oxidized [2Fe-2S]-[ferredoxin] + H2O = (2E)-4-hydroxy-3-methylbut-2-enyl diphosphate + 2 reduced [2Fe-2S]-[ferredoxin] + 2 H(+). The catalysed reaction is dimethylallyl diphosphate + 2 oxidized [2Fe-2S]-[ferredoxin] + H2O = (2E)-4-hydroxy-3-methylbut-2-enyl diphosphate + 2 reduced [2Fe-2S]-[ferredoxin] + 2 H(+). The protein operates within isoprenoid biosynthesis; dimethylallyl diphosphate biosynthesis; dimethylallyl diphosphate from (2E)-4-hydroxy-3-methylbutenyl diphosphate: step 1/1. It participates in isoprenoid biosynthesis; isopentenyl diphosphate biosynthesis via DXP pathway; isopentenyl diphosphate from 1-deoxy-D-xylulose 5-phosphate: step 6/6. Its function is as follows. Catalyzes the conversion of 1-hydroxy-2-methyl-2-(E)-butenyl 4-diphosphate (HMBPP) into a mixture of isopentenyl diphosphate (IPP) and dimethylallyl diphosphate (DMAPP). Acts in the terminal step of the DOXP/MEP pathway for isoprenoid precursor biosynthesis. The chain is 4-hydroxy-3-methylbut-2-enyl diphosphate reductase from Vibrio cholerae serotype O1 (strain ATCC 39315 / El Tor Inaba N16961).